Consider the following 162-residue polypeptide: Large ribosomal subunit protein uL15 (162 aa).

Residues 1–41 form a disordered region; it reads MKLSDIADNAGSRKKRMRVGRGIGSGKGKTAGRGGKGQTAR. Residues 21 to 37 show a composition bias toward gly residues; the sequence is RGIGSGKGKTAGRGGKG.

Belongs to the universal ribosomal protein uL15 family. In terms of assembly, part of the 50S ribosomal subunit.

Functionally, binds to the 23S rRNA. The sequence is that of Large ribosomal subunit protein uL15 from Rhodopseudomonas palustris (strain BisB18).